Reading from the N-terminus, the 305-residue chain is Transmembrane protein 74 (305 aa).

Disordered regions lie at residues 52–88 (ATEMEGSKLSSSPASPSSSLQNSTLQPDAFPPGLLHS) and 123–143 (RNRSSPSAKGHNHPGELGWEN). Over residues 58 to 78 (SKLSSSPASPSSSLQNSTLQP) the composition is skewed to low complexity. The next 2 membrane-spanning stretches (helical) occupy residues 178–198 (FISAILFLVTGILLVIISYIV) and 232–252 (VIAGLCLLTLGGVILSCLLMM).

It belongs to the TMEM74 family. Expressed in heart, lung, and placenta.

The protein localises to the lysosome membrane. Its subcellular location is the cytoplasmic vesicle. It localises to the autophagosome membrane. Functionally, plays an essential role in autophagy. TMEM74-induced autophagy may involve PI3K signal transduction. This Homo sapiens (Human) protein is Transmembrane protein 74 (TMEM74).